The following is a 201-amino-acid chain: FMN-dependent NADH:quinone oxidoreductase (201 aa).

FMN-binding positions include Ser10, 16 to 18 (SQS), 96 to 99 (MYNF), and 140 to 143 (SRGG).

It belongs to the azoreductase type 1 family. Homodimer. Requires FMN as cofactor.

The enzyme catalyses 2 a quinone + NADH + H(+) = 2 a 1,4-benzosemiquinone + NAD(+). It carries out the reaction N,N-dimethyl-1,4-phenylenediamine + anthranilate + 2 NAD(+) = 2-(4-dimethylaminophenyl)diazenylbenzoate + 2 NADH + 2 H(+). Quinone reductase that provides resistance to thiol-specific stress caused by electrophilic quinones. Functionally, also exhibits azoreductase activity. Catalyzes the reductive cleavage of the azo bond in aromatic azo compounds to the corresponding amines. The sequence is that of FMN-dependent NADH:quinone oxidoreductase from Citrobacter koseri (strain ATCC BAA-895 / CDC 4225-83 / SGSC4696).